Reading from the N-terminus, the 129-residue chain is Small ribosomal subunit protein uS12 (129 aa).

3-methylthioaspartic acid is present on Asp-89.

This sequence belongs to the universal ribosomal protein uS12 family. In terms of assembly, part of the 30S ribosomal subunit. Contacts proteins S8 and S17. May interact with IF1 in the 30S initiation complex.

Functionally, with S4 and S5 plays an important role in translational accuracy. Its function is as follows. Interacts with and stabilizes bases of the 16S rRNA that are involved in tRNA selection in the A site and with the mRNA backbone. Located at the interface of the 30S and 50S subunits, it traverses the body of the 30S subunit contacting proteins on the other side and probably holding the rRNA structure together. The combined cluster of proteins S8, S12 and S17 appears to hold together the shoulder and platform of the 30S subunit. This Rickettsia akari (strain Hartford) protein is Small ribosomal subunit protein uS12.